Consider the following 301-residue polypeptide: Envoplakin-like protein (301 aa).

Positions M1–Y88 form a coiled coil. Disordered stretches follow at residues R18–S41 and G118–I166. The segment covering S26–S41 has biased composition (polar residues). The span at G136–A151 shows a compositional bias: basic and acidic residues.

This sequence belongs to the plakin or cytolinker family.

The chain is Envoplakin-like protein (EVPLL) from Homo sapiens (Human).